Reading from the N-terminus, the 90-residue chain is Acylphosphatase (90 aa).

The Acylphosphatase-like domain occupies 5–90; sequence CEKFVVSGIV…CREYQGFEIL (86 aa). Catalysis depends on residues arginine 20 and asparagine 38.

Belongs to the acylphosphatase family.

The enzyme catalyses an acyl phosphate + H2O = a carboxylate + phosphate + H(+). This is Acylphosphatase (acyP) from Vibrio vulnificus (strain CMCP6).